The primary structure comprises 346 residues: Uroporphyrinogen decarboxylase (346 aa).

Residues 21–25 (RQAGR), aspartate 71, tyrosine 146, serine 201, and histidine 316 each bind substrate.

This sequence belongs to the uroporphyrinogen decarboxylase family. In terms of assembly, homodimer.

Its subcellular location is the cytoplasm. It carries out the reaction uroporphyrinogen III + 4 H(+) = coproporphyrinogen III + 4 CO2. The protein operates within porphyrin-containing compound metabolism; protoporphyrin-IX biosynthesis; coproporphyrinogen-III from 5-aminolevulinate: step 4/4. Catalyzes the decarboxylation of four acetate groups of uroporphyrinogen-III to yield coproporphyrinogen-III. The sequence is that of Uroporphyrinogen decarboxylase from Rickettsia africae (strain ESF-5).